Consider the following 341-residue polypeptide: LRP2-binding protein (341 aa).

One copy of the TPR repeat lies at 56 to 89 (VQANFLLGQLFFEEGWYEDALLQFEKVKDEDNQA). Sel1-like repeat units follow at residues 90-122 (LYQA…TSDC), 130-165 (YAAA…DNGN), 170-203 (LKAQ…GNGS), 204-239 (LESQ…ERGN), 240-271 (VYAQ…SHDN), and 291-326 (AIAT…QLDA).

The protein resides in the cytoplasm. Its function is as follows. May act as an adapter that regulates LRP2 function. The sequence is that of LRP2-binding protein (lrp2bp) from Xenopus laevis (African clawed frog).